The primary structure comprises 1461 residues: Potassium channel K2 (1461 aa).

6 helical membrane-spanning segments follow: residues 44–64 (IIEGLLCIITGVILKLSLIYI), 142–162 (FNYYFCNIRDMCYTIIWYISL), 183–203 (IYNMLLILLSTSYIDLVMVII), 218–238 (LIDIFFSAPCTYLFSKFIFVF), 242–262 (IDIYFMMGFLRNIKIFLNVSY), and 281–301 (IVLGVLLLCNAFASTIYTIQA). Positions 322 to 340 (YFYFSIISISTVGYGDIFP) form an intramembrane region, pore-forming. Residues 349–369 (CIIFIFWTFIWVPIQFNDLII) traverse the membrane as a helical segment. Residues 771–794 (KRDDFDNNNNNNNNNIVKSRKKGR) form a disordered region.

May form oligomers or interact with other proteins.

Its subcellular location is the membrane. Contributes to transmembrane potassium transport. The sequence is that of Potassium channel K2 from Plasmodium falciparum (isolate 3D7).